Consider the following 467-residue polypeptide: 3-isopropylmalate dehydratase large subunit (467 aa).

[4Fe-4S] cluster contacts are provided by cysteine 348, cysteine 409, and cysteine 412. A disordered region spans residues 423–448 (NERSISTSNRNFEGRQGKGSRTHLAS).

Belongs to the aconitase/IPM isomerase family. LeuC type 1 subfamily. As to quaternary structure, heterodimer of LeuC and LeuD. It depends on [4Fe-4S] cluster as a cofactor.

The enzyme catalyses (2R,3S)-3-isopropylmalate = (2S)-2-isopropylmalate. It functions in the pathway amino-acid biosynthesis; L-leucine biosynthesis; L-leucine from 3-methyl-2-oxobutanoate: step 2/4. In terms of biological role, catalyzes the isomerization between 2-isopropylmalate and 3-isopropylmalate, via the formation of 2-isopropylmaleate. This is 3-isopropylmalate dehydratase large subunit from Bifidobacterium longum (strain DJO10A).